Here is a 264-residue protein sequence, read N- to C-terminus: uncharacterized protein (264 aa).

The helical transmembrane segment at 182-198 threads the bilayer; sequence TVTGVSNALGFIIAALL.

To E.coli YjiC.

It is found in the membrane. This is an uncharacterized protein from Escherichia coli (strain K12).